The chain runs to 827 residues: Protein SEY1 (827 aa).

A disordered region spans residues 1 to 26 (MSQSSPSNAETDEDLSTTSSSSSFVP). The Cytoplasmic segment spans residues 1–719 (MSQSSPSNAE…KRSIVQHVTQ (719 aa)). The GB1/RHD3-type G domain maps to 63 to 291 (GNNYHIISVF…VKKDLFRPNY (229 aa)). A GTP-binding site is contributed by 73-80 (GSQSTGKS). Coiled-coil stretches lie at residues 389–409 (KSVY…KFRE) and 472–492 (VSNL…VELK). A helical membrane pass occupies residues 720-740 (IPYYIYLVIMVLGWNEFMAIV). Residues 741–743 (RNP) lie on the Lumenal side of the membrane. The helical transmembrane segment at 744-764 (LFFSLVLVFGAGLYILYSMNL) threads the bilayer. Residues 765 to 827 (LKPAMVVVQR…VVETIEMQDL (63 aa)) are Cytoplasmic-facing. Residues 803–823 (QKISASNREKVEEEKVVETIE) are a coiled coil.

This sequence belongs to the TRAFAC class dynamin-like GTPase superfamily. GB1/RHD3 GTPase family. RHD3 subfamily.

It is found in the endoplasmic reticulum membrane. In terms of biological role, cooperates with the reticulon proteins and tubule-shaping DP1 family proteins to generate and maintain the structure of the tubular endoplasmic reticulum network. Has GTPase activity, which is required for its function in ER organization. This chain is Protein SEY1, found in Scheffersomyces stipitis (strain ATCC 58785 / CBS 6054 / NBRC 10063 / NRRL Y-11545) (Yeast).